The chain runs to 320 residues: Beta-ketoacyl-[acyl-carrier-protein] synthase III (320 aa).

Catalysis depends on residues Cys-114 and His-247. The segment at 248–252 (QANRR) is ACP-binding. Asn-277 is a catalytic residue.

The protein belongs to the thiolase-like superfamily. FabH family. In terms of assembly, homodimer.

It is found in the cytoplasm. The enzyme catalyses malonyl-[ACP] + acetyl-CoA + H(+) = 3-oxobutanoyl-[ACP] + CO2 + CoA. It participates in lipid metabolism; fatty acid biosynthesis. Catalyzes the condensation reaction of fatty acid synthesis by the addition to an acyl acceptor of two carbons from malonyl-ACP. Catalyzes the first condensation reaction which initiates fatty acid synthesis and may therefore play a role in governing the total rate of fatty acid production. Possesses both acetoacetyl-ACP synthase and acetyl transacylase activities. Its substrate specificity determines the biosynthesis of branched-chain and/or straight-chain of fatty acids. This is Beta-ketoacyl-[acyl-carrier-protein] synthase III from Neisseria gonorrhoeae (strain ATCC 700825 / FA 1090).